The chain runs to 359 residues: Peptide chain release factor 1 (359 aa).

Residue Q235 is modified to N5-methylglutamine. A disordered region spans residues 285 to 305 (KRDSEISQMRKSQIGSGDRSE). Polar residues predominate over residues 290 to 299 (ISQMRKSQIG).

Belongs to the prokaryotic/mitochondrial release factor family. In terms of processing, methylated by PrmC. Methylation increases the termination efficiency of RF1.

It localises to the cytoplasm. Functionally, peptide chain release factor 1 directs the termination of translation in response to the peptide chain termination codons UAG and UAA. This Ehrlichia canis (strain Jake) protein is Peptide chain release factor 1.